A 594-amino-acid polypeptide reads, in one-letter code: APOBEC1 complementation factor (594 aa).

RRM domains follow at residues 56 to 134 (CEIF…ASVD), 136 to 218 (CRLF…WAEP), and 231 to 303 (KILY…LAKP). Residues 359–408 (HFPATKGHLSNRALIRTPSVREIYMNVPVGAAGVRGLGGRGYLAYTGLGR) are required for nuclear localization. Threonine 498 carries the phosphothreonine modification.

As to quaternary structure, part of the apolipoprotein B mRNA editing complex with APOBEC1. Interacts with TNPO2; TNPO2 may be responsible for transport of A1CF into the nucleus. Interacts with SYNCRIP. Interacts with CELF2/CUGBP2. Interacts with RBM47. Isoforms 1 and 2 are widely expressed while isoforms 3 and 4 are restricted to liver and small intestine.

It is found in the nucleus. The protein localises to the endoplasmic reticulum. It localises to the cytoplasm. In terms of biological role, essential component of the apolipoprotein B mRNA editing enzyme complex which is responsible for the postranscriptional editing of a CAA codon for Gln to a UAA codon for stop in APOB mRNA. Binds to APOB mRNA and is probably responsible for docking the catalytic subunit, APOBEC1, to the mRNA to allow it to deaminate its target cytosine. The complex also seems to protect the edited APOB mRNA from nonsense-mediated decay. This chain is APOBEC1 complementation factor (A1cf), found in Rattus norvegicus (Rat).